The chain runs to 318 residues: L-lactate dehydrogenase 1 (318 aa).

Residues V17, D38, K43, Y69, and 83-84 (GA) each bind NAD(+). Substrate is bound by residues Q86, R92, and 124-127 (NPVD). Residues 122 to 124 (ATN) and S147 contribute to the NAD(+) site. 152-155 (DTGR) serves as a coordination point for substrate. Beta-D-fructose 1,6-bisphosphate contacts are provided by R157 and H172. H179 functions as the Proton acceptor in the catalytic mechanism. At Y224 the chain carries Phosphotyrosine. Position 233 (T233) interacts with substrate.

It belongs to the LDH/MDH superfamily. LDH family. In terms of assembly, homotetramer.

Its subcellular location is the cytoplasm. It catalyses the reaction (S)-lactate + NAD(+) = pyruvate + NADH + H(+). It participates in fermentation; pyruvate fermentation to lactate; (S)-lactate from pyruvate: step 1/1. Allosterically activated by fructose 1,6-bisphosphate (FBP). In terms of biological role, catalyzes the conversion of lactate to pyruvate. The sequence is that of L-lactate dehydrogenase 1 from Peribacillus psychrosaccharolyticus (Bacillus psychrosaccharolyticus).